The following is a 212-amino-acid chain: ATP-dependent dethiobiotin synthetase BioD (212 aa).

13–18 contacts ATP; sequence GVGKTV. Thr17 is a Mg(2+) binding site. Lys33 is a catalytic residue. Glu100 contributes to the Mg(2+) binding site. ATP contacts are provided by residues 100–103 and 184–186; these read EGAG and PHL.

This sequence belongs to the dethiobiotin synthetase family. Homodimer. The cofactor is Mg(2+).

It localises to the cytoplasm. The enzyme catalyses (7R,8S)-7,8-diammoniononanoate + CO2 + ATP = (4R,5S)-dethiobiotin + ADP + phosphate + 3 H(+). The protein operates within cofactor biosynthesis; biotin biosynthesis; biotin from 7,8-diaminononanoate: step 1/2. In terms of biological role, catalyzes a mechanistically unusual reaction, the ATP-dependent insertion of CO2 between the N7 and N8 nitrogen atoms of 7,8-diaminopelargonic acid (DAPA, also called 7,8-diammoniononanoate) to form a ureido ring. In Rhodopseudomonas palustris (strain BisB5), this protein is ATP-dependent dethiobiotin synthetase BioD.